A 370-amino-acid polypeptide reads, in one-letter code: Platelet-derived growth factor D (370 aa).

The N-terminal stretch at 1–23 (MQRLVLVSILLCANFSCYPDTFA) is a signal peptide. The 119-residue stretch at 52 to 170 (REENIQVTSN…PGFKIYYSFV (119 aa)) folds into the CUB domain. Residues cysteine 109 and cysteine 131 are joined by a disulfide bond. An N-linked (GlcNAc...) asparagine glycan is attached at asparagine 276. Disulfide bonds link cysteine 302-cysteine 360 and cysteine 306-cysteine 362.

It belongs to the PDGF/VEGF growth factor family. As to quaternary structure, homodimer; disulfide-linked. Interacts with PDGFRB homodimers, and with heterodimers formed by PDGFRA and PDGFRB. Activated by proteolytic cleavage. Proteolytic removal of the N-terminal CUB domain releasing the core domain is necessary for unmasking the receptor-binding epitopes of the core domain. Cleavage after Arg-247 or Arg-249 by urokinase plasminogen activator gives rise to the active form. In terms of tissue distribution, expressed at high levels in developing heart, lung, kidney and some muscle derivatives. Moderately expressed in liver, brain and testis. In the kidney, localized to glomerular mesangial cells and vascular smooth muscle cells. Up-regulated in areas of renal fibrosis. In mice with unilateral ureteral obstruction, expressed in interstitial cells at day 4, with an increased to maximal expression at day 14.

The protein localises to the secreted. Growth factor that plays an essential role in the regulation of embryonic development, cell proliferation, cell migration, survival and chemotaxis. Potent mitogen for cells of mesenchymal origin. Plays an important role in wound healing. Has oncogenic potential and can induce tumor formation. Induces macrophage recruitment, increased interstitial pressure, and blood vessel maturation during angiogenesis. Can initiate events that lead to a mesangial proliferative glomerulonephritis, including influx of monocytes and macrophages and production of extracellular matrix. This chain is Platelet-derived growth factor D (Pdgfd), found in Mus musculus (Mouse).